The following is a 365-amino-acid chain: tRNA 2-selenouridine synthase (365 aa).

The 125-residue stretch at 12 to 136 (FLDDVPMMDM…LRTFLLDTTQ (125 aa)) folds into the Rhodanese domain. The S-selanylcysteine intermediate role is filled by cysteine 95.

It belongs to the SelU family. As to quaternary structure, monomer.

The enzyme catalyses 5-methylaminomethyl-2-thiouridine(34) in tRNA + selenophosphate + (2E)-geranyl diphosphate + H2O + H(+) = 5-methylaminomethyl-2-selenouridine(34) in tRNA + (2E)-thiogeraniol + phosphate + diphosphate. It carries out the reaction 5-methylaminomethyl-2-thiouridine(34) in tRNA + (2E)-geranyl diphosphate = 5-methylaminomethyl-S-(2E)-geranyl-thiouridine(34) in tRNA + diphosphate. The catalysed reaction is 5-methylaminomethyl-S-(2E)-geranyl-thiouridine(34) in tRNA + selenophosphate + H(+) = 5-methylaminomethyl-2-(Se-phospho)selenouridine(34) in tRNA + (2E)-thiogeraniol. It catalyses the reaction 5-methylaminomethyl-2-(Se-phospho)selenouridine(34) in tRNA + H2O = 5-methylaminomethyl-2-selenouridine(34) in tRNA + phosphate. Involved in the post-transcriptional modification of the uridine at the wobble position (U34) of tRNA(Lys), tRNA(Glu) and tRNA(Gln). Catalyzes the conversion of 2-thiouridine (S2U-RNA) to 2-selenouridine (Se2U-RNA). Acts in a two-step process involving geranylation of 2-thiouridine (S2U) to S-geranyl-2-thiouridine (geS2U) and subsequent selenation of the latter derivative to 2-selenouridine (Se2U) in the tRNA chain. In Pseudomonas putida (strain W619), this protein is tRNA 2-selenouridine synthase.